Consider the following 206-residue polypeptide: Ion-translocating oxidoreductase complex subunit G (206 aa).

The helical transmembrane segment at 9-29 threads the bilayer; it reads GITLALFAAGSTGLTAAINQM. Threonine 174 bears the FMN phosphoryl threonine mark.

It belongs to the RnfG family. The complex is composed of six subunits: RsxA, RsxB, RsxC, RsxD, RsxE and RsxG. It depends on FMN as a cofactor.

The protein resides in the cell inner membrane. Part of a membrane-bound complex that couples electron transfer with translocation of ions across the membrane. Required to maintain the reduced state of SoxR. In Escherichia coli O157:H7, this protein is Ion-translocating oxidoreductase complex subunit G.